A 280-amino-acid chain; its full sequence is HCLS1-associated protein X-1 (280 aa).

At S2 the chain carries N-acetylserine. The tract at residues 2-45 is required for localization in mitochondria; the sequence is SVFDLFRGFFGFPGPRSHRDPFFGGMTRDDDDDDDDDDEAEEDR. Disordered regions lie at residues 12–70 and 100–263; these read GFPG…SFSP and TLPS…SALD. Acidic residues predominate over residues 30 to 43; sequence DDDDDDDDDDEAEE. The involved in HCLS1 binding stretch occupies residues 115-280; it reads TPGERLREGQ…LLLGRWFRSR (166 aa). Composition is skewed to basic and acidic residues over residues 116–125 and 134–154; these read PGERLREGQT and PDSHQPRIFEGVLESHAKPES. The involved in CASP9 binding stretch occupies residues 176–207; the sequence is VSPHSRAKEDKDLDSQVSQEGLGPLLQPQPKS. The involved in GNA13 binding stretch occupies residues 177-248; it reads SPHSRAKEDK…TTVTHQEAHD (72 aa). Residues 184 to 280 are required for localization in sarcoplasmic reticulum; the sequence is EDKDLDSQVS…LLLGRWFRSR (97 aa). The segment at 185–280 is involved in PKD2 binding; that stretch reads DKDLDSQVSQ…LLLGRWFRSR (96 aa). Phosphoserine is present on residues S190 and S193. The tract at residues 204 to 226 is involved in PLN binding; it reads QPKSYFKSISVTKITKPDGTVEE. Residues 204–246 are involved in ATP2A2 binding; that stretch reads QPKSYFKSISVTKITKPDGTVEERRTVVDSEGRRETTVTHQEA. The interval 211–280 is mediates interaction with UCP3; it reads SISVTKITKP…LLLGRWFRSR (70 aa). Basic and acidic residues predominate over residues 218–256; the sequence is TKPDGTVEERRTVVDSEGRRETTVTHQEAHDSSRSDPDS. The required for ITGB6 binding stretch occupies residues 271-280; it reads LLLGRWFRSR.

Belongs to the HAX1 family. As to quaternary structure, interacts with ABCB1, ABCB4 and ABCB11. Directly associates with HCLS1/HS1, through binding to its N-terminal region. Interacts with CTTN. Interacts with PKD2. Interacts with GNA13. Interacts with CASP9. Interacts with ITGB6. Interacts with PLN and ATP2A2; these interactions are inhibited by calcium. Interacts with GRB7. Interacts (via C-terminus) with XIAP/BIRC4 (via BIR 2 domain and BIR 3 domain) and this interaction blocks ubiquitination of XIAP/BIRC4. Interacts with TPC2. Interacts with KCNC3. Interacts with XPO1. Interacts with RNF217. Interacts with UCP3; the interaction is direct and calcium-dependent. Interacts with MAPRE2; this interaction regulates cell migration in keratinocytes. In terms of tissue distribution, ubiquitous, with highest levels in kidney and liver (at protein level).

The protein resides in the mitochondrion matrix. The protein localises to the endoplasmic reticulum. It localises to the nucleus membrane. It is found in the cytoplasmic vesicle. Its subcellular location is the cytoplasm. The protein resides in the cell cortex. The protein localises to the cell membrane. It localises to the sarcoplasmic reticulum. It is found in the P-body. Its subcellular location is the nucleus. Its function is as follows. Recruits the Arp2/3 complex to the cell cortex and regulates reorganization of the cortical actin cytoskeleton via its interaction with KCNC3 and the Arp2/3 complex. Slows down the rate of inactivation of KCNC3 channels. Promotes GNA13-mediated cell migration. Involved in the clathrin-mediated endocytosis pathway. May be involved in internalization of ABC transporters such as ABCB11. May inhibit CASP9 and CASP3. Promotes cell survival. May regulate intracellular calcium pools. The chain is HCLS1-associated protein X-1 (Hax1) from Mus musculus (Mouse).